A 399-amino-acid chain; its full sequence is Elongation factor Tu (399 aa).

The tr-type G domain maps to lysine 10–glutamine 207. The interval glycine 19–threonine 26 is G1. Residue glycine 19–threonine 26 coordinates GTP. Threonine 26 provides a ligand contact to Mg(2+). Residues glycine 60–asparagine 64 form a G2 region. Residues aspartate 81–glycine 84 are G3. Residues aspartate 81–histidine 85 and asparagine 136–aspartate 139 contribute to the GTP site. The G4 stretch occupies residues asparagine 136–aspartate 139. Positions serine 174 to leucine 176 are G5.

Belongs to the TRAFAC class translation factor GTPase superfamily. Classic translation factor GTPase family. EF-Tu/EF-1A subfamily. In terms of assembly, monomer.

It localises to the cytoplasm. The catalysed reaction is GTP + H2O = GDP + phosphate + H(+). Its function is as follows. GTP hydrolase that promotes the GTP-dependent binding of aminoacyl-tRNA to the A-site of ribosomes during protein biosynthesis. The chain is Elongation factor Tu from Kosmotoga olearia (strain ATCC BAA-1733 / DSM 21960 / TBF 19.5.1).